A 1460-amino-acid chain; its full sequence is Collagen alpha-1(I) chain (1460 aa).

Positions 1–22 (MFSFVDLRLLLLLAATALLTHG) are cleaved as a signal peptide. A propeptide spans 23-157 (QEEGQEEDIP…PPGLGGNFAP (135 aa)) (N-terminal propeptide). Residues 34–92 (VTCVQNGLRYYDRDVWKPEACRICVCDNGNVLCDDVICDETKNCPGAQVPPGECCPVCP) form the VWFC domain. The segment at 96–1213 (ASPTDQETTG…KAHDGGRYYR (1118 aa)) is disordered. Positions 134–149 (PGLPGPPGPPGPPGPP) are enriched in pro residues. The interval 158–174 (QMSYGYDEKSTGGISVP) is nonhelical region (N-terminal). Lys166 bears the Allysine mark. Ser167 is modified (phosphoserine). The tract at residues 175 to 1188 (GPMGPSGPRG…PGPPGPPGPP (1014 aa)) is triple-helical region. 4-hydroxyproline is present on residues Pro186, Pro189, Pro192, Pro201, Pro204, Pro207, Pro222, Pro237, Pro243, Pro252, and Pro258. Residues 194-213 (PQGFQGPPGEPGEPGASGPM) are compositionally biased toward low complexity. Basic and acidic residues predominate over residues 225–239 (NGDDGEAGKPGRPGE). At Lys261 the chain carries 5-hydroxylysine; alternate. An O-linked (Gal...) hydroxylysine; alternate glycan is attached at Lys261. A Phosphoserine modification is found at Ser267. A compositionally biased stretch (low complexity) spans 275–291 (DAGPAGPKGEPGSPGEN). A 4-hydroxyproline mark is found at Pro285, Pro288, Pro294, Pro303, and Pro309. The span at 314-327 (PAGARGNDGATGAA) shows a compositional bias: low complexity. A compositionally biased stretch (pro residues) spans 329 to 341 (PPGPTGPAGPPGF). 4-hydroxyproline is present on residues Pro330, Pro339, Pro342, Pro369, Pro372, Pro384, Pro390, Pro399, Pro405, Pro408, and Pro423. Positions 375-414 (AGAAGPAGNPGADGQPGAKGANGAPGIAGAPGFPGARGPS) are enriched in low complexity. Residue Lys426 is modified to 5-hydroxylysine. A 4-hydroxyproline mark is found at Pro432, Pro435, Pro447, Pro456, Pro471, Pro477, Pro486, and Pro492. A compositionally biased stretch (gly residues) spans 481 to 490 (GERGGPGSRG). The residue at position 501 (Lys501) is a 5-hydroxylysine. 4-hydroxyproline occurs at positions 510, 519, 525, 531, 540, 543, 552, 561, 567, 579, 588, 597, 600, 618, 636, 642, 648, 654, 660, 666, 678, 687, 699, 711, 714, 720, 726, and 735. The segment covering 534–560 (KGLTGSPGSPGPDGKTGPPGPAGQDGR) has biased composition (low complexity). Residues 569-588 (ARGQAGVMGFPGPKGAAGEP) show a composition bias toward low complexity. Residues 630–657 (QGPAGSPGFQGLPGPAGPPGEAGKPGEQ) are compositionally biased toward low complexity. The segment covering 692-720 (PRGANGAPGNDGAKGDAGAPGAPGSQGAP) has biased composition (low complexity). The Cell attachment site signature appears at 741-743 (RGD). Position 747 is a 5-hydroxylysine (Lys747). 3 positions are modified to 4-hydroxyproline: Pro753, Pro768, and Pro774. The span at 780 to 794 (AGPSGPAGPTGARGA) shows a compositional bias: low complexity. Position 783 is a phosphoserine (Ser783). Pro795, Pro801, Pro804, Pro813, Pro819, Pro837, Pro846, and Pro855 each carry 4-hydroxyproline. Over residues 807–834 (AGFAGPPGADGQPGAKGEPGDAGAKGDA) the composition is skewed to low complexity. Pro residues predominate over residues 836 to 848 (PPGPAGPTGPPGP). 5-hydroxylysine is present on Lys858. A compositionally biased stretch (low complexity) spans 863 to 879 (SAGPPGATGFPGAAGRV). Residues Pro867 and Pro873 each carry the 4-hydroxyproline modification. Pro881 carries the post-translational modification 3-hydroxyproline. A 4-hydroxyproline mark is found at Pro882, Pro891, Pro894, Pro915, Pro924, Pro933, Pro942, Pro960, Pro969, Pro972, Pro978, Pro993, Pro999, Pro1005, Pro1014, and Pro1020. Residues 908–917 (ETGPAGRPGE) are compositionally biased toward low complexity. The segment covering 927 to 951 (AGEKGSPGADGPAGAPGTPGPQGIA) has biased composition (low complexity). The segment covering 992-1002 (PPGPMGPPGLA) has biased composition (pro residues). Residues 1004 to 1019 (PPGESGREGSPGAEGS) show a composition bias toward low complexity. The residue at position 1029 (Lys1029) is a 5-hydroxylysine. The span at 1038-1053 (AGPPGAPGAPGAPGPV) shows a compositional bias: pro residues. Residues Pro1041, Pro1044, and Pro1047 each carry the 4-hydroxyproline modification. The segment covering 1074 to 1088 (IGPVGARGPAGPQGP) has biased composition (low complexity). Residues 1089–1091 (RGD) carry the Cell attachment site motif. Residues 1089 to 1103 (RGDKGETGEQGDRGI) show a composition bias toward basic and acidic residues. The residue at position 1092 (Lys1092) is a 5-hydroxylysine. At Lys1104 the chain carries 5-hydroxylysine; alternate. A glycan (O-linked (Gal...) hydroxylysine; alternate) is linked at Lys1104. 4-hydroxyproline occurs at positions 1116, 1119, 1122, 1140, and 1155. Low complexity predominate over residues 1122 to 1155 (PGEQGPSGASGPAGPRGPPGSAGSPGKDGLNGLP). Position 1160 is a 3-hydroxyproline (Pro1160). Pro1161 is modified (4-hydroxyproline). The segment covering 1173–1188 (VGPPGPPGPPGPPGPP) has biased composition (pro residues). Pro1175 bears the 3-hydroxyproline mark. Pro1176 bears the 4-hydroxyproline mark. Pro1178 bears the 3-hydroxyproline mark. Pro1179 bears the 4-hydroxyproline mark. Position 1181 is a 3-hydroxyproline (Pro1181). Pro1182, Pro1185, and Pro1188 each carry 4-hydroxyproline. The tract at residues 1189 to 1214 (SGGFDFSFLPQPPQEKAHDGGRYYRA) is nonhelical region (C-terminal). Residues 1203 to 1213 (EKAHDGGRYYR) are compositionally biased toward basic and acidic residues. Lys1204 is subject to Allysine. The propeptide at 1215-1460 (DDANVVRDRD…GMDIGPVCFL (246 aa)) is C-terminal propeptide. The Fibrillar collagen NC1 domain maps to 1225–1460 (LEVDTTLKSL…GMDIGPVCFL (236 aa)). Cystine bridges form between Cys1255–Cys1287, Cys1295–Cys1458, and Cys1366–Cys1411. Residues Asp1273, Asn1275, Gln1276, Cys1278, and Asp1281 each contribute to the Ca(2+) site. A glycan (N-linked (GlcNAc...) asparagine) is linked at Asn1361.

It belongs to the fibrillar collagen family. As to quaternary structure, trimers of one alpha 2(I) and two alpha 1(I) chains. Interacts with MRC2. Interacts with TRAM2. Interacts with MFAP4 in a Ca (2+)-dependent manner. Post-translationally, contains mostly 4-hydroxyproline. Proline residues at the third position of the tripeptide repeating unit (G-X-Y) are hydroxylated in some or all of the chains. In terms of processing, contains 3-hydroxyproline at a few sites. This modification occurs on the first proline residue in the sequence motif Gly-Pro-Hyp, where Hyp is 4-hydroxyproline. Lysine residues at the third position of the tripeptide repeating unit (G-X-Y) are 5-hydroxylated in some or all of the chains. Post-translationally, O-glycosylated on hydroxylated lysine residues. The O-linked glycan consists of a Glc-Gal disaccharide.

It is found in the secreted. It localises to the extracellular space. The protein localises to the extracellular matrix. In terms of biological role, type I collagen is a member of group I collagen (fibrillar forming collagen). The polypeptide is Collagen alpha-1(I) chain (COL1A1) (Canis lupus familiaris (Dog)).